The sequence spans 479 residues: Preferentially expressed antigen in melanoma-like protein 7 (479 aa).

One copy of the LRR 1; degenerate repeat lies at 96 to 124; sequence MGRLKKVDFRDAQHHASLDMQDEREGRDY. One copy of the LRR 2; degenerate repeat lies at 179 to 203; that stretch reads HLCCEKLEIGAVEVSKVRNVLKFLQ. One copy of the LRR 3; degenerate repeat lies at 204–230; the sequence is PELIKELKLNTVGNLSKLAKFVPFIRK. The stretch at 231–265 is one LRR 4; degenerate repeat; that stretch reads MRNLQKLMLVRTFGTRTFTQEEKQNISKIISLFCK. LRR repeat units lie at residues 266 to 291, 292 to 323, 324 to 347, 348 to 375, and 376 to 400; these read LSCL…LRCL, EAPL…SQLK, HLCL…LKRV, AANL…ALIK, and CTQL…FLHR.

This sequence belongs to the PRAME family. Interacts with UHRF1. As to expression, seems to be specific to pluripotent tissues in the early embryo. Not detected in somatic tissues.

Promotes maintenance and self-renewal of pluripotent embryonic stem cells (ESCs), downstream of LIF/STAT3. Maintains the pluripotency state of ESCs by repressing DNA methylation through the regulation of UHRF1 stability. Mediates the proteasomal degradation of UHRF1. Is required for the establishment of the blastocyst. The protein is Preferentially expressed antigen in melanoma-like protein 7 of Mus musculus (Mouse).